We begin with the raw amino-acid sequence, 788 residues long: Protein kintoun (788 aa).

Disordered regions lie at residues 194 to 249 (LRKP…SEQD), 415 to 438 (NNSE…EISP), and 628 to 754 (HKEH…SSSV). The segment covering 225 to 241 (GKEKKDQKRVIKEEHKQ) has biased composition (basic and acidic residues). A compositionally biased stretch (polar residues) spans 417–427 (SEGLTSESNLD). Composition is skewed to basic and acidic residues over residues 628–644 (HKEH…DVGV) and 667–682 (ENTE…RYEE). Composition is skewed to polar residues over residues 685–701 (STSC…QKDS) and 744–754 (NFDSRPASSSV).

Belongs to the PIH1 family. Kintoun subfamily.

It localises to the cytoplasm. The protein resides in the dynein axonemal particle. Functionally, required for cytoplasmic pre-assembly of axonemal dyneins, thereby playing a central role in motility in cilia and flagella. Involved in pre-assembly of dynein arm complexes in the cytoplasm before intraflagellar transport loads them for the ciliary compartment. This Xenopus laevis (African clawed frog) protein is Protein kintoun.